The sequence spans 272 residues: F-box protein PP2-B10 (272 aa).

The 47-residue stretch at 11–57 folds into the F-box domain; the sequence is SSPFDSFPEDCISYIISFTNPRDACVAATVSKTFESTVKSDIIWEKF.

In terms of assembly, part of a SCF (ASK-cullin-F-box) protein ligase complex. Interacts with SKP1B/ASK2, ASK11 and ASK12.

Its pathway is protein modification; protein ubiquitination. In terms of biological role, component of SCF(ASK-cullin-F-box) E3 ubiquitin ligase complexes, which may mediate the ubiquitination and subsequent proteasomal degradation of target proteins. The polypeptide is F-box protein PP2-B10 (PP2B10) (Arabidopsis thaliana (Mouse-ear cress)).